The sequence spans 2485 residues: Probable polyketide synthase 10 (2485 aa).

The Ketosynthase family 3 (KS3) domain maps to 8–447; the sequence is EDDIAIIGVG…GANCCIILSE (440 aa). Active-site for beta-ketoacyl synthase activity residues include Cys184, His325, and His363. Residues 636–669 form an acyl/malonyl transferase region; sequence GIEASFIVGHSLGEISAAHCSGMIDLETLCYIIY. Ser646 acts as the For acyl/malonyl transferase activity in catalysis. Residues 930-1054 are N-terminal hotdog fold; the sequence is PPITILGNES…GNFHISNNLF (125 aa). Residues 930 to 1220 enclose the PKS/mFAS DH domain; the sequence is PPITILGNES…SKSLTPIQDP (291 aa). His964 serves as the catalytic Proton acceptor; for dehydratase activity. The C-terminal hotdog fold stretch occupies residues 1071 to 1220; it reads NYSLIERDDL…SKSLTPIQDP (150 aa). The active-site Proton donor; for dehydratase activity is the Asp1134. One can recognise a Carrier domain in the interval 2410 to 2485; it reads ESNKGIDGLL…NQLIKFLNKK (76 aa). Residue Ser2447 is modified to O-(pantetheine 4'-phosphoryl)serine.

Requires pantetheine 4'-phosphate as cofactor.

Its function is as follows. Probable polyketide synthase. The sequence is that of Probable polyketide synthase 10 (pks10) from Dictyostelium discoideum (Social amoeba).